The following is a 962-amino-acid chain: MTKQTLTQLEQHDLFLRRHIGPDSNQQQAMLNFVGAESLEDLTAQIVPESIRLSQDLSIGDSCGEAEGIAYIRGLADQNQVFKSYIGMGYYGTQVPNVILRNVFENPGWYTAYTPYQPEIAQGRLEAILNFQQVSMDLTGLDLASASLLDEATAAAEAMALAKRVSKAKKANIFFVADDVFPQTLDVVKTRAECFGFEVVVGPASEAVNYELFGALFQYTNRFGQITDFTELFATLRAKNVIVTVAADIMSLVLLKSPGSMGADVVFGSAQRFGVPMGFGGPHAAFFVARDEHKRSMPGRIIGVSKDARGNRALRMAMQTREQHIRREKANSNICTAQILLANMASFYAVFHGPDGLKTIASRINRFADILAAGLQAKGVSLVNSTWFDTISIKGLDVAAVNARALAAEMNLRFDADGTVGVSLDETTLRTDIEALFDVILGAGHGLDVAALDAQIVSQGSQSIPAALVRQDAILSHPTFNRYQSETEMMRYIKRLESKDLALNYSMISLGSCTMKLNAAVEMLPVSWPEFANMHPFSPLDQAKGYTQLIEELSTWLVNITGYDAVCIQPNSGAQGEYAGLLAIKKYHESRGDAHRNICLIPQSAHGTNPASAQLAGMQVVVTACDKQGNVDLDDLKTKAAEVAGNLSCIMITYPSTHGVYEESIREICDIVHQHGGQVYLDGANMNAQVGLTSPGFIGADVSHLNLHKTFAIPHGGGGPGMGPIGVKSHLAPFVAGHVVVKPGRESDHNGAVSAAPYGSAGILPISWMYIKLLGSNGLKKSTQTALLNANYVMKKLSEHYPVLFRGRNDRVAHECIIDLRPLKEASGVTEMDIAKRLNDYGFHAPTMSFPVAGTLMIEPTESESKVELDRFIDAMVSIRAEIAKVESGEWPVDNNPLHNAPHTMADIMDPEFDTRPYSREVAVFPSAAVRTNKFWPTVNRIDDVYGDRNLMCSCAPLSDYE.

At Lys-709 the chain carries N6-(pyridoxal phosphate)lysine.

It belongs to the GcvP family. In terms of assembly, the glycine cleavage system is composed of four proteins: P, T, L and H. The cofactor is pyridoxal 5'-phosphate.

The catalysed reaction is N(6)-[(R)-lipoyl]-L-lysyl-[glycine-cleavage complex H protein] + glycine + H(+) = N(6)-[(R)-S(8)-aminomethyldihydrolipoyl]-L-lysyl-[glycine-cleavage complex H protein] + CO2. Functionally, the glycine cleavage system catalyzes the degradation of glycine. The P protein binds the alpha-amino group of glycine through its pyridoxal phosphate cofactor; CO(2) is released and the remaining methylamine moiety is then transferred to the lipoamide cofactor of the H protein. In Shewanella baltica (strain OS155 / ATCC BAA-1091), this protein is Glycine dehydrogenase (decarboxylating).